The primary structure comprises 163 residues: Probable phosphotransferase enzyme IIB component M6_Spy0801 (163 aa).

In terms of domain architecture, PTS EIIB type-4 spans 1-163; sequence MITQIRVDDR…TKVHLSQLVN (163 aa). Histidine 13 acts as the Pros-phosphohistidine intermediate in catalysis.

It is found in the cytoplasm. Functionally, the phosphoenolpyruvate-dependent sugar phosphotransferase system (sugar PTS), a major carbohydrate active -transport system, catalyzes the phosphorylation of incoming sugar substrates concomitantly with their translocation across the cell membrane. The polypeptide is Probable phosphotransferase enzyme IIB component M6_Spy0801 (Streptococcus pyogenes serotype M6 (strain ATCC BAA-946 / MGAS10394)).